Reading from the N-terminus, the 156-residue chain is ATP synthase subunit b (156 aa).

A helical transmembrane segment spans residues Leu-7 to Leu-29.

The protein belongs to the ATPase B chain family. In terms of assembly, F-type ATPases have 2 components, F(1) - the catalytic core - and F(0) - the membrane proton channel. F(1) has five subunits: alpha(3), beta(3), gamma(1), delta(1), epsilon(1). F(0) has three main subunits: a(1), b(2) and c(10-14). The alpha and beta chains form an alternating ring which encloses part of the gamma chain. F(1) is attached to F(0) by a central stalk formed by the gamma and epsilon chains, while a peripheral stalk is formed by the delta and b chains.

The protein resides in the cell inner membrane. F(1)F(0) ATP synthase produces ATP from ADP in the presence of a proton or sodium gradient. F-type ATPases consist of two structural domains, F(1) containing the extramembraneous catalytic core and F(0) containing the membrane proton channel, linked together by a central stalk and a peripheral stalk. During catalysis, ATP synthesis in the catalytic domain of F(1) is coupled via a rotary mechanism of the central stalk subunits to proton translocation. Functionally, component of the F(0) channel, it forms part of the peripheral stalk, linking F(1) to F(0). The protein is ATP synthase subunit b of Methylobacillus flagellatus (strain ATCC 51484 / DSM 6875 / VKM B-1610 / KT).